Consider the following 519-residue polypeptide: Chloroethene reductive dehalogenase (519 aa).

The segment at residues methionine 1–serine 43 is a signal peptide (tat-type signal). 2 4Fe-4S ferredoxin-type domains span residues proline 388 to glutamate 420 and leucine 435 to alanine 465. Cysteine 400, cysteine 403, cysteine 406, cysteine 410, cysteine 444, cysteine 448, cysteine 451, and cysteine 455 together coordinate [4Fe-4S] cluster.

The protein belongs to the PceA family. Requires [4Fe-4S] cluster as cofactor. Corrinoid is required as a cofactor. Post-translationally, predicted to be exported by the Tat system. The position of the signal peptide cleavage has been experimentally proven.

The protein resides in the cell membrane. The catalysed reaction is chloroethene + AH2 = ethene + chloride + A + H(+). The enzyme catalyses (Z)-1,2-dichloroethene + AH2 = chloroethene + chloride + A + H(+). It catalyses the reaction 1,1-dichloroethene + AH2 = chloroethene + chloride + A + H(+). Functionally, catalyzes the reductive dechlorination of chloroethene (or vinyl chloride, VC) to ethene. Can also reduce all dichloroethene (DCE) isomers, but not tetrachloroethene (PCE) or trichloroethene (TCE), at high rates. Reduced methyl viologen can act as the artificial electron donor. The sequence is that of Chloroethene reductive dehalogenase from Dehalococcoides mccartyi (strain VS).